A 37-amino-acid chain; its full sequence is Large ribosomal subunit protein bL36c (37 aa).

It belongs to the bacterial ribosomal protein bL36 family.

It localises to the plastid. It is found in the chloroplast. In Chlamydomonas reinhardtii (Chlamydomonas smithii), this protein is Large ribosomal subunit protein bL36c (rpl36).